A 952-amino-acid chain; its full sequence is Meiotic coiled-coil protein 3 (952 aa).

3 coiled-coil regions span residues 283–611 (QLLQ…KEHL), 684–716 (TKKFVQKDQEYQTKEIELRNYKITLQSLLEDKL), and 839–942 (SLEN…RERE).

Its subcellular location is the cytoplasm. In terms of biological role, has a role in meiosis. The polypeptide is Meiotic coiled-coil protein 3 (mcp3) (Schizosaccharomyces pombe (strain 972 / ATCC 24843) (Fission yeast)).